A 526-amino-acid polypeptide reads, in one-letter code: D-arabinono-1,4-lactone oxidase (526 aa).

In terms of domain architecture, FAD-binding PCMH-type spans 22–196; it reads FWSRPSLYFQ…VYATLRTVPA (175 aa). Position 59 is a pros-8alpha-FAD histidine (H59).

Belongs to the oxygen-dependent FAD-linked oxidoreductase family. FAD serves as cofactor.

Its subcellular location is the mitochondrion membrane. The enzyme catalyses D-arabinono-1,4-lactone + O2 = dehydro-D-arabinono-1,4-lactone + H2O2 + H(+). It participates in cofactor biosynthesis; D-erythroascorbate biosynthesis; dehydro-D-arabinono-1,4-lactone from D-arabinose: step 2/2. The sequence is that of D-arabinono-1,4-lactone oxidase (ALO1) from Yarrowia lipolytica (strain CLIB 122 / E 150) (Yeast).